The primary structure comprises 119 residues: Large ribosomal subunit protein bL17 (119 aa).

This sequence belongs to the bacterial ribosomal protein bL17 family. In terms of assembly, part of the 50S ribosomal subunit. Contacts protein L32.

The sequence is that of Large ribosomal subunit protein bL17 from Psychrobacter arcticus (strain DSM 17307 / VKM B-2377 / 273-4).